Here is a 1877-residue protein sequence, read N- to C-terminus: Protein TIC 214 (1877 aa).

The next 6 membrane-spanning stretches (helical) occupy residues 18–38, 64–84, 87–107, 124–144, 172–192, and 221–241; these read IINS…FSVG, FITG…HLAL, PHTI…WKNH, LSIQ…HFIL, VGWL…LFWI, and IFRI…PSPI. Disordered stretches follow at residues 246–313, 644–695, and 774–795; these read LKET…GKEK, DDFE…NSDR, and PEFK…QKKE. 3 stretches are compositionally biased toward acidic residues: residues 251–268, 281–304, and 645–659; these read ETEE…EIET, GSTE…DETE, and DFEE…ESTE. Basic and acidic residues predominate over residues 685-695; that stretch reads TSTKDTTNSDR.

The protein belongs to the TIC214 family. As to quaternary structure, part of the Tic complex.

The protein localises to the plastid. It is found in the chloroplast inner membrane. Its function is as follows. Involved in protein precursor import into chloroplasts. May be part of an intermediate translocation complex acting as a protein-conducting channel at the inner envelope. In Chloranthus spicatus (Chulantree), this protein is Protein TIC 214.